The following is a 536-amino-acid chain: Probable cytochrome P450 520A1 (536 aa).

A helical membrane pass occupies residues Met1–Lys21. Cys479 serves as a coordination point for heme.

The protein belongs to the cytochrome P450 family. The cofactor is heme.

It localises to the membrane. This is Probable cytochrome P450 520A1 (cyp520A1) from Dictyostelium discoideum (Social amoeba).